The following is a 364-amino-acid chain: Protein leg1a (364 aa).

An N-terminal signal peptide occupies residues 1–22; sequence MSEMGFLRSVAAVLLLAVFSHA. Asparagine 70 carries an N-linked (GlcNAc...) asparagine glycan.

Belongs to the LEG1 family. In terms of tissue distribution, detected in all tissues tested, with the highest levels in serum (at protein level). At mRNA level, only expressed in liver.

The protein localises to the secreted. Its function is as follows. Important for early development of liver, exocrine pancreas and intestine, probably through cell cycle regulation. In liver, its function is partially redundant with leg1b function. The protein is Protein leg1a of Danio rerio (Zebrafish).